Consider the following 226-residue polypeptide: Cytidylate kinase (226 aa).

12-20 (GPSGAGKGT) serves as a coordination point for ATP.

The protein belongs to the cytidylate kinase family. Type 1 subfamily.

The protein resides in the cytoplasm. The catalysed reaction is CMP + ATP = CDP + ADP. The enzyme catalyses dCMP + ATP = dCDP + ADP. This chain is Cytidylate kinase, found in Colwellia psychrerythraea (strain 34H / ATCC BAA-681) (Vibrio psychroerythus).